The sequence spans 373 residues: Beta sliding clamp (373 aa).

It belongs to the beta sliding clamp family. In terms of assembly, forms a ring-shaped head-to-tail homodimer around DNA which binds and tethers DNA polymerases and other proteins to the DNA. The DNA replisome complex has a single clamp-loading complex (3 tau and 1 each of delta, delta', psi and chi subunits) which binds 3 Pol III cores (1 core on the leading strand and 2 on the lagging strand) each with a beta sliding clamp dimer. Additional proteins in the replisome are other copies of gamma, psi and chi, Ssb, DNA helicase and RNA primase.

The protein localises to the cytoplasm. Functionally, confers DNA tethering and processivity to DNA polymerases and other proteins. Acts as a clamp, forming a ring around DNA (a reaction catalyzed by the clamp-loading complex) which diffuses in an ATP-independent manner freely and bidirectionally along dsDNA. Initially characterized for its ability to contact the catalytic subunit of DNA polymerase III (Pol III), a complex, multichain enzyme responsible for most of the replicative synthesis in bacteria; Pol III exhibits 3'-5' exonuclease proofreading activity. The beta chain is required for initiation of replication as well as for processivity of DNA replication. In Mycoplasmopsis pulmonis (strain UAB CTIP) (Mycoplasma pulmonis), this protein is Beta sliding clamp (dnaN).